Consider the following 142-residue polypeptide: C-type lectin 13 (142 aa).

The first 23 residues, 1-23, serve as a signal peptide directing secretion; sequence MGRLVFVSFGGWDVFLSLSGTGA. Disulfide bonds link C25/C36, C53/C138, and C115/C130. One can recognise a C-type lectin domain in the interval 32–139; that stretch reads YEGHCYRVFQ…CSKTHNVVCK (108 aa).

This sequence belongs to the snaclec family. In terms of assembly, heteromultimer; disulfide-linked. Expressed by the venom gland.

The protein localises to the secreted. In terms of biological role, interferes with one step of hemostasis (modulation of platelet aggregation, or coagulation cascade, for example). In Crotalus adamanteus (Eastern diamondback rattlesnake), this protein is C-type lectin 13.